A 202-amino-acid polypeptide reads, in one-letter code: 3-isopropylmalate dehydratase small subunit (202 aa).

This sequence belongs to the LeuD family. LeuD type 1 subfamily. In terms of assembly, heterodimer of LeuC and LeuD.

It carries out the reaction (2R,3S)-3-isopropylmalate = (2S)-2-isopropylmalate. The protein operates within amino-acid biosynthesis; L-leucine biosynthesis; L-leucine from 3-methyl-2-oxobutanoate: step 2/4. Functionally, catalyzes the isomerization between 2-isopropylmalate and 3-isopropylmalate, via the formation of 2-isopropylmaleate. The sequence is that of 3-isopropylmalate dehydratase small subunit from Paenarthrobacter aurescens (strain TC1).